The following is an 844-amino-acid chain: Lysine-specific histone demethylase 1 homolog 1 (844 aa).

Positions 1–18 (MSTETKETRPETKPEDLG) are enriched in basic and acidic residues. Residues 1-131 (MSTETKETRP…PGPRARKRRR (131 aa)) form a disordered region. Residues 26 to 40 (PGEEPLGELIADDVN) are compositionally biased toward acidic residues. Composition is skewed to polar residues over residues 46 to 62 (ASAT…QSEQ) and 107 to 118 (DLVTEQQSQNPN). Residues 154–255 (GKEVDSEALI…FGLAPVIKEA (102 aa)) form the SWIRM domain. FAD contacts are provided by E295, R297, and R303. The short motif at 516–523 (LKKGSIEF) is the Nuclear localization signal element. E679 is a binding site for FAD.

Belongs to the flavin monoamine oxidase family. As to quaternary structure, interacts with CZS. Interacts with OTU6/OTLD1. The cofactor is FAD. In terms of tissue distribution, expressed in the shoot and root apical regions of young seedlings. Expressed in cotyledons and inflorescences.

The protein resides in the nucleus. Its subcellular location is the cytoplasm. Functionally, probable histone demethylase that reduces the levels of histone H3 'Lys-4' methylation in chromatin of the floral repressor FLOWERING LOCUS C (FLC) and the sporophytically silenced floral repressor FWA. Seems to act in partial redundancy with FLOWERING LOCUS D (FLD) to repress FLC expression. Required for cytosine methylation of FWA. Controls primary seed dormancy by regulating DOG1 and abscisic acid signaling-related genes. In association with OTU6/OTLD1, involved in transcriptional gene repression via histone deubiquitination and demethylation. This chain is Lysine-specific histone demethylase 1 homolog 1, found in Arabidopsis thaliana (Mouse-ear cress).